A 157-amino-acid chain; its full sequence is Endoribonuclease YbeY (157 aa).

Positions 114, 118, and 124 each coordinate Zn(2+).

Belongs to the endoribonuclease YbeY family. Zn(2+) is required as a cofactor.

It is found in the cytoplasm. Its function is as follows. Single strand-specific metallo-endoribonuclease involved in late-stage 70S ribosome quality control and in maturation of the 3' terminus of the 16S rRNA. The polypeptide is Endoribonuclease YbeY (Yersinia pseudotuberculosis serotype O:1b (strain IP 31758)).